A 262-amino-acid polypeptide reads, in one-letter code: 3-methyl-2-oxobutanoate hydroxymethyltransferase (262 aa).

Mg(2+)-binding residues include Asp-31 and Asp-70. 3-methyl-2-oxobutanoate contacts are provided by residues 31–32 (DS), Asp-70, and Lys-99. Mg(2+) is bound at residue Glu-101. Glu-168 serves as the catalytic Proton acceptor.

It belongs to the PanB family. In terms of assembly, homodecamer; pentamer of dimers. Mg(2+) serves as cofactor.

Its subcellular location is the cytoplasm. It catalyses the reaction 3-methyl-2-oxobutanoate + (6R)-5,10-methylene-5,6,7,8-tetrahydrofolate + H2O = 2-dehydropantoate + (6S)-5,6,7,8-tetrahydrofolate. Its pathway is cofactor biosynthesis; coenzyme A biosynthesis. Catalyzes the reversible reaction in which hydroxymethyl group from 5,10-methylenetetrahydrofolate is transferred onto alpha-ketoisovalerate to form ketopantoate. The sequence is that of 3-methyl-2-oxobutanoate hydroxymethyltransferase from Cenarchaeum symbiosum (strain A).